A 124-amino-acid chain; its full sequence is Glutaredoxin-2 (124 aa).

Residues Cys-13 and Cys-16 are joined by a disulfide bond.

The protein belongs to the glutaredoxin family. Homodimer.

It is found in the host cytoplasm. In terms of biological role, glutaredoxin necessary for virion morphogenesis and virus replication. Functions as a thiol-disulfide transfer protein between membrane-associated OPG128 and substrates OPG095 or OPG053. The complete pathway for formation of disulfide bonds in intracellular virion membrane proteins sequentially involves oxidation of OPG072, OPG128 and OPG088. Exhibit thioltransferase and dehydroascorbate reductase activities in vitro. In Oryctolagus cuniculus (Rabbit), this protein is Glutaredoxin-2 (OPG088).